Consider the following 132-residue polypeptide: Ribosome-binding factor A (132 aa).

It belongs to the RbfA family. As to quaternary structure, monomer. Binds 30S ribosomal subunits, but not 50S ribosomal subunits or 70S ribosomes.

It localises to the cytoplasm. Its function is as follows. One of several proteins that assist in the late maturation steps of the functional core of the 30S ribosomal subunit. Associates with free 30S ribosomal subunits (but not with 30S subunits that are part of 70S ribosomes or polysomes). Required for efficient processing of 16S rRNA. May interact with the 5'-terminal helix region of 16S rRNA. The protein is Ribosome-binding factor A of Prochlorococcus marinus (strain MIT 9515).